The following is a 180-amino-acid chain: ATP synthase subunit delta (180 aa).

The protein belongs to the ATPase delta chain family. In terms of assembly, F-type ATPases have 2 components, F(1) - the catalytic core - and F(0) - the membrane proton channel. F(1) has five subunits: alpha(3), beta(3), gamma(1), delta(1), epsilon(1). F(0) has three main subunits: a(1), b(2) and c(10-14). The alpha and beta chains form an alternating ring which encloses part of the gamma chain. F(1) is attached to F(0) by a central stalk formed by the gamma and epsilon chains, while a peripheral stalk is formed by the delta and b chains.

It is found in the cell membrane. Its function is as follows. F(1)F(0) ATP synthase produces ATP from ADP in the presence of a proton or sodium gradient. F-type ATPases consist of two structural domains, F(1) containing the extramembraneous catalytic core and F(0) containing the membrane proton channel, linked together by a central stalk and a peripheral stalk. During catalysis, ATP synthesis in the catalytic domain of F(1) is coupled via a rotary mechanism of the central stalk subunits to proton translocation. Functionally, this protein is part of the stalk that links CF(0) to CF(1). It either transmits conformational changes from CF(0) to CF(1) or is implicated in proton conduction. This is ATP synthase subunit delta from Lactobacillus delbrueckii subsp. bulgaricus (strain ATCC BAA-365 / Lb-18).